Consider the following 40-residue polypeptide: MADTTGRIPLWIIGTGAGILVIGLIGIFFYGSYSGLGSSL.

A helical membrane pass occupies residues 8-28 (IPLWIIGTGAGILVIGLIGIF).

The protein belongs to the PsbJ family. In terms of assembly, PSII is composed of 1 copy each of membrane proteins PsbA, PsbB, PsbC, PsbD, PsbE, PsbF, PsbH, PsbI, PsbJ, PsbK, PsbL, PsbM, PsbT, PsbX, PsbY, PsbZ, Psb30/Ycf12, at least 3 peripheral proteins of the oxygen-evolving complex and a large number of cofactors. It forms dimeric complexes.

It is found in the plastid. The protein resides in the chloroplast thylakoid membrane. In terms of biological role, one of the components of the core complex of photosystem II (PSII). PSII is a light-driven water:plastoquinone oxidoreductase that uses light energy to abstract electrons from H(2)O, generating O(2) and a proton gradient subsequently used for ATP formation. It consists of a core antenna complex that captures photons, and an electron transfer chain that converts photonic excitation into a charge separation. The chain is Photosystem II reaction center protein J from Aethionema grandiflorum (Persian stone-cress).